The sequence spans 61 residues: uncharacterized protein (61 aa).

This is an uncharacterized protein from Treponema pallidum (strain Nichols).